The following is a 1477-amino-acid chain: Neurexin-1 (1477 aa).

The signal sequence occupies residues 1–30 (MGTALLQRGGCFLLCLSLLLLGCWAELGSG). Residues 31–217 (LEFPGAEGQW…PPNSGGGSPC (187 aa)) enclose the Laminin G-like 1 domain. Over 31–1401 (LEFPGAEGQW…EVIRESSSTT (1371 aa)) the chain is Extracellular. Residues Asn125 and Asn190 are each glycosylated (N-linked (GlcNAc...) asparagine). Residues 198-221 (DSGEVKLDDEPPNSGGGSPCEAGE) form a disordered region. The EGF-like 1 domain occupies 213 to 256 (GGSPCEAGEEGEGGVCLNGGVCSVVDDQAVCDCSRTGFRGKDCS). 2 disulfides stabilise this stretch: Cys228-Cys243 and Cys245-Cys255. 2 consecutive Laminin G-like domains span residues 283–473 (IATF…AFKC) and 480–672 (DPIT…KPSC). Ca(2+)-binding residues include Asp329, Leu346, and Met407. 5 disulfides stabilise this stretch: Cys437/Cys473, Cys643/Cys672, Cys680/Cys691, Cys685/Cys700, and Cys702/Cys712. The EGF-like 2 domain maps to 676-713 (TAKPCLSNPCKNNGMCRDGWNRYVCDCSGTGYLGRSCE). 2 consecutive Laminin G-like domains span residues 718–891 (VLSY…IDYC) and 905–1080 (DPVT…ERGC). Asp765 and Leu782 together coordinate Ca(2+). Residue Asn790 is glycosylated (N-linked (GlcNAc...) asparagine). Arg841 is a binding site for Ca(2+). 5 disulfides stabilise this stretch: Cys883–Cys891, Cys1052–Cys1080, Cys1087–Cys1098, Cys1092–Cys1107, and Cys1109–Cys1119. Residues 1083-1120 (PSTTCQEDSCSNQGVCLQQWDGFSCDCSMTSFSGPLCN) form the EGF-like 3 domain. Positions 1126 to 1294 (YIFSKGGGQI…DANIAIVGNV (169 aa)) constitute a Laminin G-like 6 domain. Ca(2+)-binding residues include Asp1176 and Val1193. A glycan (N-linked (GlcNAc...) asparagine) is linked at Asn1223. Residues Ile1245 and Asn1247 each coordinate Ca(2+). The disordered stretch occupies residues 1325-1390 (TTTLATSTAR…AGGREPYPGS (66 aa)). Ser1355 carries an O-linked (Xyl...) (heparan sulfate) serine glycan. The helical transmembrane segment at 1402–1422 (GMVVGIVAAAALCILILLYAM) threads the bilayer. Topologically, residues 1423 to 1477 (YKYRNRDEGSYHVDESRNYISNSAQSNGAVVKEKQPSSAKSSNKNKKNKDKEYYV) are cytoplasmic. Residues 1444 to 1470 (NSAQSNGAVVKEKQPSSAKSSNKNKKN) form an interaction with CASK region. Residues 1444-1477 (NSAQSNGAVVKEKQPSSAKSSNKNKKNKDKEYYV) form a disordered region.

The protein belongs to the neurexin family. As to quaternary structure, interacts (via laminin G-like domain 2 and/or laminin G-like domain 6) with NLGN1 forming a heterotetramer, where one NLGN1 dimer interacts with one NRXN1 dimer. Also interacts (via laminin G-like domain 2 and/or laminin G-like domain 6) with NLGN2, NLGN3 and NLGN4L; interactions with NLGN1, NLGN2, NLGN3 and NLGN4L are calcium-dependent. Interacts (via cytoplasmic C-terminal region) with CASK (via the PDZ, SH3 and guanylate kinase-like domains). Interacts (via cytoplasmic C-terminus) with CASKIN1 and APBA1. Interacts (via laminin G-like domain 2) with NXPH1 and NXPH3. Alpha-type isoforms (neurexin-1-alpha) interact (via laminin G-like domain 2 and/or laminin G-like domain 6) with DAG1 (via alpha-dystroglycan chain). Interacts with LRRTM1, LRRTM2, LRRTM3 and LRRTM4. Interacts with SYT13 and SYTL1. Interacts with CBLN1, CBLN2 and, less avidly, with CBLN4. Interacts with CLSTN3. Post-translationally, O-glycosylated; contains heparan sulfate. Heparan sulfate attachment is required for synapse development by mediating interactions with neuroligins and LRRTM2. Brain.

Its subcellular location is the presynaptic cell membrane. In terms of biological role, cell surface protein involved in cell-cell-interactions, exocytosis of secretory granules and regulation of signal transmission. Function is isoform-specific. Alpha-type isoforms have a long N-terminus with six laminin G-like domains and play an important role in synaptic signal transmission. Alpha-type isoforms play a role in the regulation of calcium channel activity and Ca(2+)-triggered neurotransmitter release at synapses and at neuromuscular junctions. They play an important role in Ca(2+)-triggered exocytosis of secretory granules in pituitary gland. They may affect their functions at synapses and in endocrine cells via their interactions with proteins from the exocytotic machinery. Likewise, alpha-type isoforms play a role in regulating the activity of postsynaptic NMDA receptors, a subtype of glutamate-gated ion channels. Both alpha-type and beta-type isoforms may play a role in the formation or maintenance of synaptic junctions via their interactions (via the extracellular domains) with neuroligin family members, CBLN1 or CBLN2. In vitro, triggers the de novo formation of presynaptic structures. May be involved in specification of excitatory synapses. Alpha-type isoforms were first identified as receptors for alpha-latrotoxin from spider venom. In Homo sapiens (Human), this protein is Neurexin-1 (NRXN1).